Reading from the N-terminus, the 222-residue chain is N-(5'-phosphoribosyl)anthranilate isomerase (222 aa).

Belongs to the TrpF family.

It carries out the reaction N-(5-phospho-beta-D-ribosyl)anthranilate = 1-(2-carboxyphenylamino)-1-deoxy-D-ribulose 5-phosphate. It functions in the pathway amino-acid biosynthesis; L-tryptophan biosynthesis; L-tryptophan from chorismate: step 3/5. The polypeptide is N-(5'-phosphoribosyl)anthranilate isomerase (Xanthomonas euvesicatoria pv. vesicatoria (strain 85-10) (Xanthomonas campestris pv. vesicatoria)).